The following is a 488-amino-acid chain: Replication-associated protein (488 aa).

The segment at proline 462 to serine 488 is disordered.

The protein localises to the host nucleus. Plays an essential for the replication of viral DNA. Presumably cleaves viral genomic dsRNA replicative form to initiate rolling circle replication. This Chaetoceros diatodnavirus 1 (Chaetoceros setoense DNA virus) protein is Replication-associated protein.